We begin with the raw amino-acid sequence, 487 residues long: Probable Xaa-Pro aminopeptidase CPSG_02684 (487 aa).

Polar residues predominate over residues 1–10 (MAGSNTLSSS). The interval 1–22 (MAGSNTLSSSEHGDDPRGHSYS) is disordered. Residues Asp275, Asp286, Glu421, and Glu460 each contribute to the Mn(2+) site.

It belongs to the peptidase M24B family. Mn(2+) serves as cofactor.

It carries out the reaction Release of any N-terminal amino acid, including proline, that is linked to proline, even from a dipeptide or tripeptide.. Functionally, catalyzes the removal of a penultimate prolyl residue from the N-termini of peptides. The sequence is that of Probable Xaa-Pro aminopeptidase CPSG_02684 from Coccidioides posadasii (strain RMSCC 757 / Silveira) (Valley fever fungus).